Consider the following 709-residue polypeptide: Coiled-coil domain-containing protein 13 (709 aa).

3 coiled-coil regions span residues 70–97 (IFEKRVLEDEIQHLRSELRETVDENGRL), 139–178 (ELSKKNRGLMAESESAKVRIKQLTNRIQELEHQLQMASAK), and 206–288 (EVKA…QRQN). Residue S258 is modified to Phosphoserine. The disordered stretch occupies residues 281 to 312 (KQLGQRQNKPAGSSSSEVPLSSDSRKMTAQEK). Residues 293-302 (SSSSEVPLSS) are compositionally biased toward low complexity. The stretch at 323-457 (DKQESWEKLA…ELEIGQLSVQ (135 aa)) forms a coiled coil. Disordered regions lie at residues 462-499 (KGGGEGASPADARFPEDQTPITNSPASAGDHVGRLGSS), 512-542 (SALTRPSLPSPHGTSPRFSDSPEQKGWQAQA), and 600-641 (KMRL…SSTQ). S469 and S532 each carry phosphoserine. The stretch at 539–604 (QAQAAEMKAL…EQHLEKMRLE (66 aa)) forms a coiled coil.

In terms of assembly, interacts with PCM1, CEP290 and PCNT.

The protein resides in the cytoplasm. It localises to the cytoskeleton. Its subcellular location is the microtubule organizing center. It is found in the centrosome. The protein localises to the centriolar satellite. The protein resides in the cilium basal body. Its function is as follows. Required for primary cilia formation and promotes the localization of the ciliopathy protein BBS4 to both centriolar satellites and cilia. The polypeptide is Coiled-coil domain-containing protein 13 (Mus musculus (Mouse)).